The primary structure comprises 427 residues: Serine hydroxymethyltransferase (427 aa).

(6S)-5,6,7,8-tetrahydrofolate contacts are provided by residues L118 and G122 to L124. K227 carries the N6-(pyridoxal phosphate)lysine modification. Position 351 to 353 (S351 to F353) interacts with (6S)-5,6,7,8-tetrahydrofolate.

It belongs to the SHMT family. In terms of assembly, homodimer. Pyridoxal 5'-phosphate is required as a cofactor.

The protein resides in the cytoplasm. It catalyses the reaction (6R)-5,10-methylene-5,6,7,8-tetrahydrofolate + glycine + H2O = (6S)-5,6,7,8-tetrahydrofolate + L-serine. The protein operates within one-carbon metabolism; tetrahydrofolate interconversion. Its pathway is amino-acid biosynthesis; glycine biosynthesis; glycine from L-serine: step 1/1. Its function is as follows. Catalyzes the reversible interconversion of serine and glycine with tetrahydrofolate (THF) serving as the one-carbon carrier. This reaction serves as the major source of one-carbon groups required for the biosynthesis of purines, thymidylate, methionine, and other important biomolecules. Also exhibits THF-independent aldolase activity toward beta-hydroxyamino acids, producing glycine and aldehydes, via a retro-aldol mechanism. In Thermotoga petrophila (strain ATCC BAA-488 / DSM 13995 / JCM 10881 / RKU-1), this protein is Serine hydroxymethyltransferase.